A 123-amino-acid polypeptide reads, in one-letter code: Methanesulfonate monooxygenase ferredoxin subunit (123 aa).

Residues 4 to 99 form the Rieske domain; that stretch reads TYLCDAADVA…LKEEDGKLLA (96 aa). Positions 43, 45, 63, and 66 each coordinate [2Fe-2S] cluster.

It belongs to the bacterial ring-hydroxylating dioxygenase ferredoxin component family. In terms of assembly, the MSA monooxygenase system consists of 4 proteins: the 2 subunits of the hydroxylase component (MsmA and MsmB), a ferredoxin (MsmC) and a ferredoxin reductase (MsmD). The ferredoxin component is dimeric. [2Fe-2S] cluster is required as a cofactor.

Its subcellular location is the cytoplasm. It catalyses the reaction methanesulfonate + NADH + O2 = sulfite + formaldehyde + NAD(+) + H2O. Its activity is regulated as follows. MSAMO is inhibited by metal chelators (such as bathophenanthroline, bathocuprione, neocuprione, alpha-alpha-dipyridil and sodium EDTA) and by sodium azide, sodium arsenate and potassium cyanide. Methanesulfonate monooxygenase (MSAMO) mediates the primary degradation of methanesulfonic acid (MSA) to produce formaldehyd and inorganic sulfite by initial hydroxylation of the carbon atom prior to spontaneous cleavage of the unstable hydroxymethanesulfonic acid. MSAMO has a restricted substrate range that includes only the short-chain aliphatic sulfonates (methane- to butanesulfonate) and excludes all larger molecules, such as arylsulfonates and aromatic sulfonates. All MSAMO components are required for enzyme activity. The protein is Methanesulfonate monooxygenase ferredoxin subunit of Methylosulfonomonas methylovora.